The primary structure comprises 273 residues: Putative phosphoenolpyruvate synthase regulatory protein (273 aa).

Residue 153-160 participates in ADP binding; that stretch reads AVSRAGKT.

The protein belongs to the pyruvate, phosphate/water dikinase regulatory protein family. PSRP subfamily.

The enzyme catalyses [pyruvate, water dikinase] + ADP = [pyruvate, water dikinase]-phosphate + AMP + H(+). It catalyses the reaction [pyruvate, water dikinase]-phosphate + phosphate + H(+) = [pyruvate, water dikinase] + diphosphate. In terms of biological role, bifunctional serine/threonine kinase and phosphorylase involved in the regulation of the phosphoenolpyruvate synthase (PEPS) by catalyzing its phosphorylation/dephosphorylation. This chain is Putative phosphoenolpyruvate synthase regulatory protein, found in Xylella fastidiosa (strain 9a5c).